The primary structure comprises 289 residues: Enoyl-CoA delta isomerase 1, mitochondrial (289 aa).

The N-terminal 28 residues, 1–28 (MALAAARRLLLHAGSRLGRREAVDGARR), are a transit peptide targeting the mitochondrion. K48 carries the N6-acetyllysine; alternate modification. Position 48 is an N6-succinyllysine; alternate (K48). At K71 the chain carries N6-succinyllysine. An N6-acetyllysine modification is found at K76. Residues 93-97 (AGLDL), G140, and N164 contribute to the substrate site. K222, K229, K255, and K270 each carry N6-acetyllysine; alternate. K222, K229, K255, and K270 each carry N6-succinyllysine; alternate. Position 275 is an N6-succinyllysine (K275). K283 carries the N6-acetyllysine; alternate modification. N6-succinyllysine; alternate is present on K283.

It belongs to the enoyl-CoA hydratase/isomerase family. Homotrimer.

It is found in the mitochondrion matrix. It catalyses the reaction a (3Z)-enoyl-CoA = a 4-saturated (2E)-enoyl-CoA. It carries out the reaction a (3E)-enoyl-CoA = a 4-saturated (2E)-enoyl-CoA. The enzyme catalyses (3Z)-octenoyl-CoA = (2E)-octenoyl-CoA. The catalysed reaction is (2E)-tetradecenoyl-CoA = (3Z)-tetradecenoyl-CoA. It catalyses the reaction (3Z)-dodecenoyl-CoA = (2E)-dodecenoyl-CoA. It carries out the reaction (3Z)-hexenoyl-CoA = (2E)-hexenoyl-CoA. The enzyme catalyses (3Z)-decenoyl-CoA = (2E)-decenoyl-CoA. The protein operates within lipid metabolism; fatty acid beta-oxidation. Key enzyme of fatty acid beta-oxidation. Able to isomerize both 3-cis (3Z) and 3-trans (3E) double bonds into the 2-trans (2E) form in a range of enoyl-CoA species, with a preference for (3Z)-enoyl-CoAs over (3E)-enoyl-CoAs. The catalytic efficiency of this enzyme is not affected by the fatty acyl chain length. This chain is Enoyl-CoA delta isomerase 1, mitochondrial, found in Mus musculus (Mouse).